The primary structure comprises 394 residues: Ribulose bisphosphate carboxylase large chain (394 aa).

Residue K5 is modified to N6,N6,N6-trimethyllysine. Substrate-binding residues include N114 and T164. K166 functions as the Proton acceptor in the catalytic mechanism. K168 contributes to the substrate binding site. K192, D194, and E195 together coordinate Mg(2+). An N6-carboxylysine modification is found at K192. H285 serves as the catalytic Proton acceptor. Residues R286, H318, and S370 each contribute to the substrate site.

The protein belongs to the RuBisCO large chain family. Type I subfamily. As to quaternary structure, heterohexadecamer of 8 large chains and 8 small chains. It depends on Mg(2+) as a cofactor.

It is found in the plastid. The protein localises to the chloroplast. It catalyses the reaction 2 (2R)-3-phosphoglycerate + 2 H(+) = D-ribulose 1,5-bisphosphate + CO2 + H2O. The enzyme catalyses D-ribulose 1,5-bisphosphate + O2 = 2-phosphoglycolate + (2R)-3-phosphoglycerate + 2 H(+). Functionally, ruBisCO catalyzes two reactions: the carboxylation of D-ribulose 1,5-bisphosphate, the primary event in carbon dioxide fixation, as well as the oxidative fragmentation of the pentose substrate in the photorespiration process. Both reactions occur simultaneously and in competition at the same active site. In Euryale ferox (Gorgon plant), this protein is Ribulose bisphosphate carboxylase large chain (rbcL).